A 122-amino-acid chain; its full sequence is MIQQQTLLKVADNSGAKEIMCIRVLGGSKRKWGNIGDIIVASVKSATPGGVVKKGEVVKAVIVRSARGLRRTDGSYIKFDENAAVIIKEDKQPRGTRIFGPVARELRDKDFTKILSLAPEVL.

It belongs to the universal ribosomal protein uL14 family. Part of the 50S ribosomal subunit. Forms a cluster with proteins L3 and L19. In the 70S ribosome, L14 and L19 interact and together make contacts with the 16S rRNA in bridges B5 and B8.

In terms of biological role, binds to 23S rRNA. Forms part of two intersubunit bridges in the 70S ribosome. This Clostridium kluyveri (strain ATCC 8527 / DSM 555 / NBRC 12016 / NCIMB 10680 / K1) protein is Large ribosomal subunit protein uL14.